The chain runs to 720 residues: Phosphoribosylformylglycinamidine synthase subunit PurL (720 aa).

The active site involves H34. Y37 provides a ligand contact to ATP. E83 contributes to the Mg(2+) binding site. Substrate is bound by residues 84-87 (SHNH) and R106. The Proton acceptor role is filled by H85. Position 107 (D107) interacts with Mg(2+). Residue Q231 coordinates substrate. Residue D259 coordinates Mg(2+). Position 303–305 (303–305 (ESQ)) interacts with substrate. Residues D480 and G517 each coordinate ATP. N518 contacts Mg(2+). Substrate is bound at residue S520.

This sequence belongs to the FGAMS family. Monomer. Part of the FGAM synthase complex composed of 1 PurL, 1 PurQ and 2 PurS subunits.

The protein localises to the cytoplasm. The enzyme catalyses N(2)-formyl-N(1)-(5-phospho-beta-D-ribosyl)glycinamide + L-glutamine + ATP + H2O = 2-formamido-N(1)-(5-O-phospho-beta-D-ribosyl)acetamidine + L-glutamate + ADP + phosphate + H(+). It participates in purine metabolism; IMP biosynthesis via de novo pathway; 5-amino-1-(5-phospho-D-ribosyl)imidazole from N(2)-formyl-N(1)-(5-phospho-D-ribosyl)glycinamide: step 1/2. Its function is as follows. Part of the phosphoribosylformylglycinamidine synthase complex involved in the purines biosynthetic pathway. Catalyzes the ATP-dependent conversion of formylglycinamide ribonucleotide (FGAR) and glutamine to yield formylglycinamidine ribonucleotide (FGAM) and glutamate. The FGAM synthase complex is composed of three subunits. PurQ produces an ammonia molecule by converting glutamine to glutamate. PurL transfers the ammonia molecule to FGAR to form FGAM in an ATP-dependent manner. PurS interacts with PurQ and PurL and is thought to assist in the transfer of the ammonia molecule from PurQ to PurL. In Haloarcula marismortui (strain ATCC 43049 / DSM 3752 / JCM 8966 / VKM B-1809) (Halobacterium marismortui), this protein is Phosphoribosylformylglycinamidine synthase subunit PurL.